Here is a 102-residue protein sequence, read N- to C-terminus: NADH-quinone oxidoreductase subunit K (102 aa).

3 consecutive transmembrane segments (helical) span residues 4–24, 30–50, and 62–82; these read IPME…LVGL, MLFV…AFIV, and VMFL…LALL.

The protein belongs to the complex I subunit 4L family. NDH-1 is composed of 14 different subunits. Subunits NuoA, H, J, K, L, M, N constitute the membrane sector of the complex.

The protein resides in the cell inner membrane. It catalyses the reaction a quinone + NADH + 5 H(+)(in) = a quinol + NAD(+) + 4 H(+)(out). NDH-1 shuttles electrons from NADH, via FMN and iron-sulfur (Fe-S) centers, to quinones in the respiratory chain. The immediate electron acceptor for the enzyme in this species is believed to be ubiquinone. Couples the redox reaction to proton translocation (for every two electrons transferred, four hydrogen ions are translocated across the cytoplasmic membrane), and thus conserves the redox energy in a proton gradient. This is NADH-quinone oxidoreductase subunit K from Chromohalobacter salexigens (strain ATCC BAA-138 / DSM 3043 / CIP 106854 / NCIMB 13768 / 1H11).